The sequence spans 1796 residues: Non-reducing polyketide synthase nscA (1796 aa).

Positions 18–256 (DDLKDLFRRL…PLPVYDGLCH (239 aa)) are N-terminal acylcarrier protein transacylase domain (SAT). The region spanning 392 to 825 (SSKLAIVGMA…GGNTTLLLED (434 aa)) is the Ketosynthase family 3 (KS3) domain. Active-site for beta-ketoacyl synthase activity residues include C565, H700, and H743. Residues 931–1251 (FTGQGAYYSG…SLVTLHLAGL (321 aa)) form a malonyl-CoA:ACP transacylase (MAT) domain region. The product template (PT) domain stretch occupies residues 1317–1636 (TSLVHQITAE…RLLMDRFFSP (320 aa)). The N-terminal hotdog fold stretch occupies residues 1321-1457 (HQITAETVEA…ATVRFEDPVA (137 aa)). The PKS/mFAS DH domain occupies 1321–1631 (HQITAETVEA…FRRVPRLLMD (311 aa)). H1353 functions as the Proton acceptor; for dehydratase activity in the catalytic mechanism. Residues 1485-1631 (ASRLSKPLAY…FRRVPRLLMD (147 aa)) are C-terminal hotdog fold. D1542 acts as the Proton donor; for dehydratase activity in catalysis. Positions 1688-1720 (TPESTPPLAPSSESSTPKESPIATPPESERADP) are disordered. The span at 1697–1708 (PSSESSTPKESP) shows a compositional bias: low complexity. The 78-residue stretch at 1719–1796 (DPMDNMVSQC…EMTAWIEEYC (78 aa)) folds into the Carrier domain. O-(pantetheine 4'-phosphoryl)serine is present on S1756.

Pantetheine 4'-phosphate serves as cofactor.

It functions in the pathway secondary metabolite biosynthesis. In terms of biological role, non-reducing polyketide synthase; part of the gene cluster that mediates the biosynthesis of neosartoricin B, a prenylated anthracenone that probably exhibits T-cell antiproliferative activity, suggestive of a physiological role as an immunosuppressive agent. The non-reducing polyketide synthase nscA probably synthesizes and cyclizes the decaketide backbone. The hydrolase nscB then mediates the product release through hydrolysis followed by spontaneous decarboxylation. The prenyltransferase nscD catalyzes the addition of the dimethylallyl group to the aromatic C5. The FAD-dependent monooxygenase nscC is then responsible for the stereospecific hydroxylation at C2. Neosartoricin B can be converted into two additional compounds neosartoricins C and D. Neosartoricin C is a spirocyclic compound that is cyclized through the attack of C3 hydroxyl on C14, followed by dehydration. On the other hand, neosartoricin D is a further cyclized compound in which attack of C2 on C14 in neosartoricin C results in the formation of the acetal-containing dioxabicyclo-octanone ring. Both of these compounds are novel and possibly represent related metabolites of the gene cluster. This is Non-reducing polyketide synthase nscA from Arthroderma otae (strain ATCC MYA-4605 / CBS 113480) (Microsporum canis).